Reading from the N-terminus, the 4568-residue chain is Dynein beta chain, flagellar outer arm (4568 aa).

Positions 1–1880 are stem; the sequence is MAEDEGMTAA…QVNICDAEIA (1880 aa). 5 coiled-coil regions span residues 277-293, 1158-1175, 1372-1400, 1614-1650, and 1778-1825; these read FQRL…EAND, EEAA…RKAL, KIDV…RNYD, EACT…RVAF, and QEIN…RKKL. A disordered region spans residues 1144 to 1166; that stretch reads GVEEEPEYHPDQDPEEAAAKKAA. Positions 1150-1166 are enriched in basic and acidic residues; the sequence is EYHPDQDPEEAAAKKAA. 4 AAA regions span residues 1881–2102, 2164–2385, 2493–2738, and 2841–3090; these read YSYE…TLYV, EAAH…RNFK, QYIP…ITQG, and EYNE…FRRY. Residues 1919-1926, 2202-2209, and 2530-2537 each bind ATP; these read GPAGTGKT, GAAGCGKT, and GNTGTGKS. Residues 2831–2848 adopt a coiled-coil conformation; sequence LRKTLEDKLREYNESNAV. 2879-2886 is a binding site for ATP; that stretch reads GVGGSGKQ. Coiled coils occupy residues 3106–3162, 3339–3425, and 3648–3728; these read KMLL…DELI, KRAA…RLES, and HERP…KARE. Residues 3106-3425 are stalk; the sequence is KMLLQLKRDD…WGAEIKRLES (320 aa). AAA regions lie at residues 3481-3711 and 3937-4172; these read LTDD…EIEE and MGRF…TANN.

Belongs to the dynein heavy chain family. As to quaternary structure, consists of at least 3 heavy chains (alpha, beta and gamma), 2 intermediate chains and 8 light chains.

The protein resides in the cell projection. It localises to the cilium. Its subcellular location is the flagellum. The protein localises to the cytoplasm. It is found in the cytoskeleton. The protein resides in the flagellum axoneme. Its function is as follows. Force generating protein of eukaryotic cilia and flagella. Produces force towards the minus ends of microtubules. Dynein has ATPase activity; the force-producing power stroke is thought to occur on release of ADP. The chain is Dynein beta chain, flagellar outer arm (ODA4) from Chlamydomonas reinhardtii (Chlamydomonas smithii).